A 302-amino-acid polypeptide reads, in one-letter code: Homoserine kinase (302 aa).

Position 90-100 (90-100 (KPGSGLGSSSA)) interacts with ATP.

It belongs to the GHMP kinase family. Homoserine kinase subfamily.

It localises to the cytoplasm. It carries out the reaction L-homoserine + ATP = O-phospho-L-homoserine + ADP + H(+). It participates in amino-acid biosynthesis; L-threonine biosynthesis; L-threonine from L-aspartate: step 4/5. In terms of biological role, catalyzes the ATP-dependent phosphorylation of L-homoserine to L-homoserine phosphate. In Methanococcus vannielii (strain ATCC 35089 / DSM 1224 / JCM 13029 / OCM 148 / SB), this protein is Homoserine kinase.